We begin with the raw amino-acid sequence, 148 residues long: Lysozyme C (148 aa).

Positions 1–18 (MKVLILLGLVLLSVMVQG) are cleaved as a signal peptide. The region spanning 19–148 (KVFERCELAR…VSQYIQGCGV (130 aa)) is the C-type lysozyme domain. Disulfide bonds link cysteine 24-cysteine 146, cysteine 48-cysteine 134, cysteine 83-cysteine 99, and cysteine 95-cysteine 113. Catalysis depends on residues glutamate 53 and aspartate 71.

The protein belongs to the glycosyl hydrolase 22 family. In terms of assembly, monomer.

Its subcellular location is the secreted. The catalysed reaction is Hydrolysis of (1-&gt;4)-beta-linkages between N-acetylmuramic acid and N-acetyl-D-glucosamine residues in a peptidoglycan and between N-acetyl-D-glucosamine residues in chitodextrins.. Functionally, lysozymes have primarily a bacteriolytic function; those in tissues and body fluids are associated with the monocyte-macrophage system and enhance the activity of immunoagents. The protein is Lysozyme C (LYZ) of Saguinus oedipus (Cotton-top tamarin).